The chain runs to 74 residues: Conotoxin Vi15a (74 aa).

The N-terminal stretch at 1–19 is a signal peptide; the sequence is MMPVILLLLLSLAIRCADG. Residues 20-43 constitute a propeptide that is removed on maturation; the sequence is KAVQGDSDPSASLLTGDKNHDLPV. The residue at position 72 (Trp-72) is a Tryptophan amide.

Post-translationally, contains four disulfide bonds. As to expression, expressed by the venom duct.

It is found in the secreted. The protein is Conotoxin Vi15a of Conus virgo (Virgin cone).